A 221-amino-acid chain; its full sequence is Deoxyribose-phosphate aldolase (221 aa).

Residue D96 is the Proton donor/acceptor of the active site. K157 acts as the Schiff-base intermediate with acetaldehyde in catalysis. K185 serves as the catalytic Proton donor/acceptor.

It belongs to the DeoC/FbaB aldolase family. DeoC type 1 subfamily.

It is found in the cytoplasm. The catalysed reaction is 2-deoxy-D-ribose 5-phosphate = D-glyceraldehyde 3-phosphate + acetaldehyde. Its pathway is carbohydrate degradation; 2-deoxy-D-ribose 1-phosphate degradation; D-glyceraldehyde 3-phosphate and acetaldehyde from 2-deoxy-alpha-D-ribose 1-phosphate: step 2/2. Functionally, catalyzes a reversible aldol reaction between acetaldehyde and D-glyceraldehyde 3-phosphate to generate 2-deoxy-D-ribose 5-phosphate. This Crocosphaera subtropica (strain ATCC 51142 / BH68) (Cyanothece sp. (strain ATCC 51142)) protein is Deoxyribose-phosphate aldolase.